Here is a 98-residue protein sequence, read N- to C-terminus: NADH-ubiquinone oxidoreductase chain 4L (98 aa).

3 helical membrane passes run 1–21 (MSMV…GLLM), 29–49 (SLLC…MTIL), and 61–81 (IILL…LVMV).

This sequence belongs to the complex I subunit 4L family. In terms of assembly, core subunit of respiratory chain NADH dehydrogenase (Complex I) which is composed of 45 different subunits.

It is found in the mitochondrion inner membrane. The catalysed reaction is a ubiquinone + NADH + 5 H(+)(in) = a ubiquinol + NAD(+) + 4 H(+)(out). In terms of biological role, core subunit of the mitochondrial membrane respiratory chain NADH dehydrogenase (Complex I) which catalyzes electron transfer from NADH through the respiratory chain, using ubiquinone as an electron acceptor. Part of the enzyme membrane arm which is embedded in the lipid bilayer and involved in proton translocation. This Otaria byronia (South American sea lion) protein is NADH-ubiquinone oxidoreductase chain 4L (MT-ND4L).